Reading from the N-terminus, the 1067-residue chain is Ubiquitin carboxyl-terminal hydrolase 26 (1067 aa).

Positions 1–12 (MSRPNTRNKNKR) are enriched in basic residues. The disordered stretch occupies residues 1–22 (MSRPNTRNKNKRQRPDAVDSSS). A USP domain is found at 106 to 442 (AGLTNLGATC…DAYMLMYSLR (337 aa)). The active-site Nucleophile is the Cys-115. The Proton acceptor role is filled by His-359. Positions 385-418 (KRPCNEASSSTPQSESNGTASSGNITDGIQSGSS) are disordered. The segment covering 390–418 (EASSSTPQSESNGTASSGNITDGIQSGSS) has biased composition (polar residues). 3 DUSP domains span residues 503–595 (NALT…GDYC), 610–711 (DSYR…DCTC), and 738–861 (TLKV…SAFI). The Ubiquitin-like domain occupies 948 to 1031 (FEVDRRTSKR…LWVRDTEMHE (84 aa)).

It belongs to the peptidase C19 family. Expressed in seedlings, roots, stems, leaves and inflorescences.

It is found in the nucleus. It carries out the reaction Thiol-dependent hydrolysis of ester, thioester, amide, peptide and isopeptide bonds formed by the C-terminal Gly of ubiquitin (a 76-residue protein attached to proteins as an intracellular targeting signal).. Its function is as follows. Recognizes and hydrolyzes the peptide bond at the C-terminal Gly of ubiquitin. Involved in the processing of poly-ubiquitin precursors as well as that of ubiquitinated proteins. Deubiquitinates H2BK143ub1 of histone H2B. This chain is Ubiquitin carboxyl-terminal hydrolase 26 (UBP26), found in Arabidopsis thaliana (Mouse-ear cress).